The sequence spans 206 residues: Large ribosomal subunit protein bL25 (206 aa).

Positions Ala-184–Glu-206 are disordered. Basic and acidic residues predominate over residues Glu-195–Glu-206.

Belongs to the bacterial ribosomal protein bL25 family. CTC subfamily. Part of the 50S ribosomal subunit; part of the 5S rRNA/L5/L18/L25 subcomplex. Contacts the 5S rRNA. Binds to the 5S rRNA independently of L5 and L18.

Functionally, this is one of the proteins that binds to the 5S RNA in the ribosome where it forms part of the central protuberance. The protein is Large ribosomal subunit protein bL25 of Thermus thermophilus (strain ATCC BAA-163 / DSM 7039 / HB27).